The following is an 874-amino-acid chain: Alanine--tRNA ligase (874 aa).

Zn(2+)-binding residues include His564, His568, Cys665, and His669.

It belongs to the class-II aminoacyl-tRNA synthetase family. It depends on Zn(2+) as a cofactor.

The protein resides in the cytoplasm. It catalyses the reaction tRNA(Ala) + L-alanine + ATP = L-alanyl-tRNA(Ala) + AMP + diphosphate. Its function is as follows. Catalyzes the attachment of alanine to tRNA(Ala) in a two-step reaction: alanine is first activated by ATP to form Ala-AMP and then transferred to the acceptor end of tRNA(Ala). Also edits incorrectly charged Ser-tRNA(Ala) and Gly-tRNA(Ala) via its editing domain. This Acidovorax sp. (strain JS42) protein is Alanine--tRNA ligase.